The following is a 149-amino-acid chain: Transcription factor Atoh7 (149 aa).

The bHLH domain occupies 41-93; that stretch reads RRRLAANARERRRMQGLNTAFDRLRRVVPQWGQDKKLSKYETLQMALSYIIAL.

In terms of assembly, forms a heterodimer with TCF3 isoform E47; interaction may be required for DNA-binding in certain situations. Expressed in retinal ganglion cells. Expressed in the cerebellum, trapezoid body, ventral nucleus of the lateral lamniscus and in areas of the auditory hindbrain such as the cochlear nucleus, lateral superior olive and medial nucleus of the trapezoid body. Expressed in the modiolar nerve root and in the cochlear in a small group of bushy neurons within the acoustic nerve. Expressed weakly in the sensory epithelia of the saccule and utricle.

The protein localises to the nucleus. Its subcellular location is the perikaryon. It is found in the cell projection. It localises to the axon. Transcription factor that binds to DNA at the consensus sequence 5'-CAG[GC]TG-3'. Dimerization with TCF3 isoform E47 may be required in certain situations. Binds to gene promoters and enhancer elements, and thereby regulates a transcriptional program of retinal ganglion cell (RGC) determinant genes. Although the exact mechanism is not certain, retinal transcription regulation by ATOH7 has a role in RGC determination and survival, photoreceptor population development, targeting of RGC axons to the optic nerve and development of the retino-hypothalamic tract. Binds to its own promoter and enhancer sequences, suggesting autoregulation of ATOH7 transcription. Required for retinal circadian rhythm photoentrainment. Plays a role in brainstem auditory signaling and binaural processing. The sequence is that of Transcription factor Atoh7 from Mus musculus (Mouse).